Here is a 310-residue protein sequence, read N- to C-terminus: 4-hydroxyproline 2-epimerase (310 aa).

Catalysis depends on cysteine 85, which acts as the Proton acceptor. Residues glycine 86–histidine 87, histidine 205, and aspartate 231 each bind substrate. Cysteine 235 functions as the Proton donor in the catalytic mechanism. A substrate-binding site is contributed by glycine 236–threonine 237.

It belongs to the proline racemase family.

The catalysed reaction is trans-4-hydroxy-L-proline = cis-4-hydroxy-D-proline. Catalyzes the epimerization of trans-4-hydroxy-L-proline (t4LHyp) to cis-4-hydroxy-D-proline (c4DHyp). May be involved in a degradation pathway of t4LHyp, which would allow L.aggregata to grow on t4LHyp as a sole carbon source. Displays no proline racemase activity. The sequence is that of 4-hydroxyproline 2-epimerase from Roseibium aggregatum (strain ATCC 25650 / DSM 13394 / JCM 20685 / NBRC 16684 / NCIMB 2208 / IAM 12614 / B1) (Stappia aggregata).